The sequence spans 302 residues: Probable lipid kinase YegS-like (302 aa).

In terms of domain architecture, DAGKc spans Met-1–Leu-129. ATP is bound by residues Thr-39, Gly-65–Glu-71, and Thr-92. Arg-210, Asp-213, and Leu-215 together coordinate Mg(2+). Glu-268 (proton acceptor) is an active-site residue.

It belongs to the diacylglycerol/lipid kinase family. YegS lipid kinase subfamily. Mg(2+) serves as cofactor. Requires Ca(2+) as cofactor.

It is found in the cytoplasm. Probably phosphorylates lipids; the in vivo substrate is unknown. The chain is Probable lipid kinase YegS-like from Pseudomonas aeruginosa (strain ATCC 15692 / DSM 22644 / CIP 104116 / JCM 14847 / LMG 12228 / 1C / PRS 101 / PAO1).